Reading from the N-terminus, the 196-residue chain is NADH-quinone oxidoreductase subunit C (196 aa).

The protein belongs to the complex I 30 kDa subunit family. NDH-1 is composed of 14 different subunits. Subunits NuoB, C, D, E, F, and G constitute the peripheral sector of the complex.

The protein resides in the cell inner membrane. The catalysed reaction is a quinone + NADH + 5 H(+)(in) = a quinol + NAD(+) + 4 H(+)(out). Functionally, NDH-1 shuttles electrons from NADH, via FMN and iron-sulfur (Fe-S) centers, to quinones in the respiratory chain. The immediate electron acceptor for the enzyme in this species is believed to be ubiquinone. Couples the redox reaction to proton translocation (for every two electrons transferred, four hydrogen ions are translocated across the cytoplasmic membrane), and thus conserves the redox energy in a proton gradient. This is NADH-quinone oxidoreductase subunit C from Rickettsia bellii (strain RML369-C).